Consider the following 2298-residue polypeptide: Non-reducing polyketide synthase pgmA (2298 aa).

Residues 8–333 (LFIFGDQTLD…IYNVLKQSPL (326 aa)) form an N-terminal acylcarrier protein transacylase domain (SAT) region. The tract at residues 336-361 (YLSSKPAQSRQPVSNEGAPEPGNGRQ) is disordered. Residues 340-349 (KPAQSRQPVS) are compositionally biased toward polar residues. The Ketosynthase family 3 (KS3) domain occupies 360 to 798 (RQKLAIIGMS…GGNSALLVED (439 aa)). Catalysis depends on for beta-ketoacyl synthase activity residues Cys532, His667, and His714. The tract at residues 901-1193 (VFAFTGQGAH…GMVKGVLGPQ (293 aa)) is acyl/malonyl transferases. The For acyl/malonyl transferase activity role is filled by Ser994. Positions 1283 to 1415 (HRVVEETHDS…CVVRFRDRGL (133 aa)) are N-terminal hotdog fold. Residues 1283–1589 (HRVVEETHDS…IQGVPRRVLK (307 aa)) enclose the PKS/mFAS DH domain. The product template (PT) domainn stretch occupies residues 1294-1586 (KTRIVIEADI…QISIQGVPRR (293 aa)). His1315 acts as the Proton acceptor; for dehydratase activity in catalysis. The interval 1438-1589 (VTGETARFNR…IQGVPRRVLK (152 aa)) is C-terminal hotdog fold. Asp1502 functions as the Proton donor; for dehydratase activity in the catalytic mechanism. The segment at 1619–1642 (YPVANGHAQATPTSGPVNGEPRPS) is disordered. Positions 1641–1716 (PSRFPRALEI…SLRALLSEPE (76 aa)) constitute a Carrier 1 domain. Ser1675 is modified (O-(pantetheine 4'-phosphoryl)serine). Positions 1716–1762 (ERSTNGMPAASAKDTSRFDEIPPMNGHKTNGHVMNGHSNGSSNGLPD) are disordered. Residues 1751–1760 (GHSNGSSNGL) are compositionally biased toward polar residues. One can recognise a Carrier 2 domain in the interval 1765–1840 (KVDFQRVLQI…DLKRYLFPQD (76 aa)). Ser1799 is subject to O-(pantetheine 4'-phosphoryl)serine. The tract at residues 1927–2178 (VTGASGSLGG…YWTPVEEVAG (252 aa)) is reductase (R) domain.

Its pathway is pigment biosynthesis. The protein operates within secondary metabolite biosynthesis. Functionally, non-reducing polyketide synthase; part of the gene cluster that mediates the biosynthesis of pleosporalin A, ascomycone A, as well as a third cryptic naphthoquinone derived pigment, all responsible for the coloration of conidia. The non-reducing polyketide synthase pgmA is responsible for the condensation of seven acetyl-CoA units to produce the cyclized heptaketide 3-acetonyl-1,6,8-trihydroxy-2-naphthaldehyde. The pathway begins with the biosynthesis of the cyclized heptaketide 3-acetonyl-1,6,8-trihydroxy-2-naphthaldehyde by the NR-PKS pgmA. The C-6 hydroxyl group is further methylated by the O-methyltransferase pgmB to yield fusarubinaldehyde which is in turn oxidized by the cytochrome P450 monooxygenase pgmC at C-9. The C-1 hydroxyl group is then methylated spontaneously. Although pgmE, pgmD and pgmH are essential for the production of pleosporalin A, it is not the case for the 2 other final products and it remains difficult to assign a specific function to each enzyme. PgmF and pgmG seem not to be involved in pigment biosynthesis although they were regulated by the cluster-specific transcription factor pgmR. The protein is Non-reducing polyketide synthase pgmA of Aspergillus terreus (strain NIH 2624 / FGSC A1156).